Consider the following 549-residue polypeptide: Oxygen-dependent choline dehydrogenase (549 aa).

4 to 33 serves as a coordination point for FAD; the sequence is DYVIVGSGSAGSAIAYRLSEDGRYSVIVIE. Catalysis depends on histidine 465, which acts as the Proton acceptor. The tract at residues 528 to 549 is disordered; the sequence is KTPLPRSNQEPWVNPRAAVSDR.

The protein belongs to the GMC oxidoreductase family. Requires FAD as cofactor.

The catalysed reaction is choline + A = betaine aldehyde + AH2. It carries out the reaction betaine aldehyde + NAD(+) + H2O = glycine betaine + NADH + 2 H(+). It functions in the pathway amine and polyamine biosynthesis; betaine biosynthesis via choline pathway; betaine aldehyde from choline (cytochrome c reductase route): step 1/1. In terms of biological role, involved in the biosynthesis of the osmoprotectant glycine betaine. Catalyzes the oxidation of choline to betaine aldehyde and betaine aldehyde to glycine betaine at the same rate. The protein is Oxygen-dependent choline dehydrogenase of Agrobacterium fabrum (strain C58 / ATCC 33970) (Agrobacterium tumefaciens (strain C58)).